Reading from the N-terminus, the 494-residue chain is Cytochrome P450 2B11 (494 aa).

Residue S128 is modified to Phosphoserine; by PKA. C436 is a binding site for heme.

Belongs to the cytochrome P450 family. The cofactor is heme.

The protein localises to the endoplasmic reticulum membrane. Its subcellular location is the microsome membrane. The catalysed reaction is an organic molecule + reduced [NADPH--hemoprotein reductase] + O2 = an alcohol + oxidized [NADPH--hemoprotein reductase] + H2O + H(+). Cytochromes P450 are a group of heme-thiolate monooxygenases. In liver microsomes, this enzyme is involved in an NADPH-dependent electron transport pathway. This isozyme seems responsible for metabolism of 2,2',4,4',5,5'-hexachlorobiphenyl. In Canis lupus familiaris (Dog), this protein is Cytochrome P450 2B11 (CYP2B11).